The following is a 240-amino-acid chain: Ribonuclease PH (240 aa).

Residues Arg-87 and 125–127 contribute to the phosphate site; that span reads GTR.

This sequence belongs to the RNase PH family. In terms of assembly, homohexameric ring arranged as a trimer of dimers.

The enzyme catalyses tRNA(n+1) + phosphate = tRNA(n) + a ribonucleoside 5'-diphosphate. Phosphorolytic 3'-5' exoribonuclease that plays an important role in tRNA 3'-end maturation. Removes nucleotide residues following the 3'-CCA terminus of tRNAs; can also add nucleotides to the ends of RNA molecules by using nucleoside diphosphates as substrates, but this may not be physiologically important. Probably plays a role in initiation of 16S rRNA degradation (leading to ribosome degradation) during starvation. In Pseudomonas fluorescens (strain SBW25), this protein is Ribonuclease PH.